Consider the following 23-residue polypeptide: Clavanin-B (23 aa).

Phe23 bears the Phenylalanine amide mark.

The protein resides in the secreted. In terms of biological role, has antimicrobial activity. This Styela clava (Sea squirt) protein is Clavanin-B.